A 475-amino-acid chain; its full sequence is Mucin-1 (475 aa).

A signal peptide spans 1 to 23 (MTPGTQSLFFLLLLLTVLTVVTG). Residues 23-252 (GSGHASSTPG…SPLTSSNHST (230 aa)) are disordered. The Extracellular segment spans residues 24 to 380 (SGHASSTPGG…QSGAGVPGWG (357 aa)). Polar residues predominate over residues 38–48 (SATQRSSMPSS). A compositionally biased stretch (low complexity) spans 54-75 (VSMTSSVLSSHSPGSGSSTTQG). Repeat copies occupy residues 86–105 (PASGSAATWGQDVTSVPVTR), 106–125 (PAPGSTTSPAQDVTSAPDTR), 126–145 (PALGSTAPPVHGVTSAPDTR), 146–165 (PTLGSTAPPVHGVTSAPDTR), and 166–185 (PTLGSTAPPVHNVTSASGSA). The segment at 86–185 (PASGSAATWG…HNVTSASGSA (100 aa)) is 5 X 20 AA approximate tandem repeats. Residues 90–102 (SAATWGQDVTSVP) are compositionally biased toward polar residues. Residues Thr-93 and Thr-99 are each glycosylated (O-linked (GalNAc...) threonine). Ser-100 carries O-linked (GalNAc...) serine glycosylation. Thr-104 carries O-linked (GalNAc...) threonine glycosylation. Residues 109–122 (GSTTSPAQDVTSAP) show a composition bias toward polar residues. The N-linked (GlcNAc...) asparagine glycan is linked to Asn-177. Residues 180 to 190 (SASGSASGSAS) show a composition bias toward low complexity. Polar residues-rich tracts occupy residues 191 to 213 (TLVHNGTSARATTTPASKSTPFS) and 233 to 252 (DASSTHHSTVSPLTSSNHST). 4 N-linked (GlcNAc...) asparagine glycosylation sites follow: Asn-195, Asn-249, Asn-275, and Asn-353. Positions 259–368 (GVSFFFLSFH…VSVSDVPFPF (110 aa)) constitute an SEA domain. The helical transmembrane segment at 381-401 (IALLVLVCVLVALAIVYLIAL) threads the bilayer. Residues 402–475 (AVCQCRRKNY…PAVAATSANL (74 aa)) lie on the Cytoplasmic side of the membrane. S-palmitoyl cysteine attachment occurs at residues Cys-404 and Cys-406. Residues 412 to 448 (GQLDIFPARDAYHPMSEYPTYHTHGRYVPPSSTNRSP) are interaction with P53. Tyr-423 bears the Phosphotyrosine; by PDGFR mark. The Interaction with GRB2 motif lies at 423–426 (YHPM). At Tyr-432 the chain carries Phosphotyrosine. Positions 435 to 460 (HGRYVPPSSTNRSPYEKVSEGNGGSS) are disordered. At Tyr-438 the chain carries Phosphotyrosine; by PDGFR. The required for interaction with GSK3B stretch occupies residues 443–450 (STNRSPYE). Thr-444 carries the phosphothreonine; by PKC/PRKCD modification. Ser-447 is subject to Phosphoserine; by GSK3-beta. Position 449 is a phosphotyrosine; by CSK, EGFR and SRC (Tyr-449). An Interaction with SRC and ESR1 motif is present at residues 449 to 452 (YEKV). The tract at residues 453-461 (SEGNGGSSL) is required for interaction with beta- and gamma-catenins. Position 463 is a phosphotyrosine (Tyr-463). The Required for interaction with AP1S2 motif lies at 463 to 466 (YTNP).

The alpha subunit forms a tight, non-covalent heterodimeric complex with the proteolytically-released beta-subunit. Binds directly the SH2 domain of GRB2, and forms a MUC1/GRB2/SOS1 complex involved in RAS signaling. The cytoplasmic tail (MUC1CT) interacts with several proteins such as SRC, CTNNB1 and ERBs. Interaction with the SH2 domain of CSK decreases interaction with GSK3B. Interacts with CTNNB1/beta-catenin and JUP/gamma-catenin and promotes cell adhesion. Interaction with JUP/gamma-catenin is induced by heregulin. Binds PRKCD, ERBB2, ERBB3 and ERBB4. Heregulin (HRG) stimulates the interaction with ERBB2 and, to a much lesser extent, the interaction with ERBB3 and ERBB4. Interacts with P53 in response to DNA damage. Interacts with KLF4. Interacts with estrogen receptor alpha/ESR1, through its DNA-binding domain, and stimulates its transcription activity. Binds ADAM17. Probably both N- and O-glycosylated (in repeat region). In terms of processing, proteolytic cleavage in the SEA domain occurs in the endoplasmic reticulum by an autoproteolytic mechanism and requires the full-length SEA domain as well as requiring a Ser, Thr or Cys residue at the P + 1 site. Ectodomain shedding is mediated by ADAM17 in uterine epithelial cells. Post-translationally, dual palmitoylation on cysteine residues in the CQC motif is required for recycling from endosomes back to the plasma membrane. Phosphorylated on tyrosines and serine residues in the C-terminal. Phosphorylation on tyrosines in the C-terminal increases the nuclear location of MUC1 and beta-catenin. Phosphorylation by PKC delta induces binding of MUC1 to beta-catenin/CTNNB1 and thus decreases the formation of the beta-catenin/E-cadherin complex. Src-mediated phosphorylation inhibits interaction with GSK3B. Csk- or Src- or EGFR-mediated phosphorylation on Tyr-449 increases binding to beta-catenin/CTNNB1. GSK3B-mediated phosphorylation on Ser-447 decreases this interaction but restores the formation of the beta-cadherin/E-cadherin complex. On T-cell receptor activation, phosphorylated by LCK. PDGFR-mediated phosphorylation increases nuclear colocalization of MUC1CT and CTNNB1.

It is found in the apical cell membrane. The protein localises to the cell membrane. The protein resides in the cytoplasm. Its subcellular location is the nucleus. Its function is as follows. The alpha subunit has cell adhesive properties. Can act both as an adhesion and an anti-adhesion protein. May provide a protective layer on epithelial cells against bacterial and enzyme attack. Functionally, the beta subunit contains a C-terminal domain which is involved in cell signaling, through phosphorylations and protein-protein interactions. Modulates signaling in ERK, Src and NF-kappaB pathways. In activated T-cells, influences directly or indirectly the Ras/MAPK pathway. Promotes tumor progression. Regulates P53-mediated transcription and determines cell fate in the genotoxic stress response. Binds, together with KLF4, the PE21 promoter element of P53 and represses P53 activity. The polypeptide is Mucin-1 (MUC1) (Hylobates lar (Lar gibbon)).